Consider the following 167-residue polypeptide: Small ribosomal subunit protein uS5 (167 aa).

Positions 12-75 (IEDRVVAINR…ETARKSLIEV (64 aa)) constitute an S5 DRBM domain.

Belongs to the universal ribosomal protein uS5 family. Part of the 30S ribosomal subunit. Contacts proteins S4 and S8.

With S4 and S12 plays an important role in translational accuracy. In terms of biological role, located at the back of the 30S subunit body where it stabilizes the conformation of the head with respect to the body. This chain is Small ribosomal subunit protein uS5, found in Pediococcus pentosaceus (strain ATCC 25745 / CCUG 21536 / LMG 10740 / 183-1w).